The sequence spans 173 residues: Large ribosomal subunit protein uL16 (173 aa).

Belongs to the universal ribosomal protein uL16 family.

The chain is Large ribosomal subunit protein uL16 from Methanococcus aeolicus (strain ATCC BAA-1280 / DSM 17508 / OCM 812 / Nankai-3).